The sequence spans 280 residues: Lacto-N-neotetraose biosynthesis glycosyltransferase LgtE (280 aa).

The protein belongs to the glycosyltransferase 25 family.

It participates in glycan metabolism; lacto-N-neotetraose biosynthesis. The protein operates within bacterial outer membrane biogenesis; lipooligosaccharide biosynthesis. In terms of biological role, adds the first galactose to the lacto-N-tetraose chain in lipooligosaccharide (LOS). This Neisseria meningitidis serogroup B (strain ATCC BAA-335 / MC58) protein is Lacto-N-neotetraose biosynthesis glycosyltransferase LgtE (lgtE).